The following is a 515-amino-acid chain: Maturase K (515 aa).

Belongs to the intron maturase 2 family. MatK subfamily.

The protein localises to the plastid. The protein resides in the chloroplast. In terms of biological role, usually encoded in the trnK tRNA gene intron. Probably assists in splicing its own and other chloroplast group II introns. The chain is Maturase K from Pinus pumila (Dwarf Siberian pine).